A 406-amino-acid chain; its full sequence is Multidrug resistance protein MdtG (406 aa).

The next 11 helical transmembrane spans lie at 16–36 (VAWLGCFLTGAAFSLVMPFLP), 56–76 (LVFSITFLFSAIASPFWGGLA), 90–110 (LGMAIVMLLMGLAQNIWQFLL), 113–133 (ALLGLLGGFVPNANALIATQV), 144–164 (TLSTGGVSGALLGPLAGGLLA), 171–191 (PVFFITASVLLVCFLLTLFFT), 222–242 (LFVTTLIIQVATGSIAPILTL), 254–274 (IAFISGMIASVPGVAALLSAP), 288–308 (ILITALIISVLLLIPMSFVQT), 317–337 (FLLGAADGALLPAVQTLLVYN), and 376–396 (AVFCVTAGVVLFNAIYSWNSL).

The protein belongs to the major facilitator superfamily. DHA1 family. MdtG (TC 2.A.1.2.20) subfamily.

It is found in the cell inner membrane. In Citrobacter koseri (strain ATCC BAA-895 / CDC 4225-83 / SGSC4696), this protein is Multidrug resistance protein MdtG.